The following is a 105-amino-acid chain: Pyrimidine/purine nucleoside phosphorylase (105 aa).

It belongs to the nucleoside phosphorylase PpnP family.

The enzyme catalyses a purine D-ribonucleoside + phosphate = a purine nucleobase + alpha-D-ribose 1-phosphate. The catalysed reaction is adenosine + phosphate = alpha-D-ribose 1-phosphate + adenine. It catalyses the reaction cytidine + phosphate = cytosine + alpha-D-ribose 1-phosphate. It carries out the reaction guanosine + phosphate = alpha-D-ribose 1-phosphate + guanine. The enzyme catalyses inosine + phosphate = alpha-D-ribose 1-phosphate + hypoxanthine. The catalysed reaction is thymidine + phosphate = 2-deoxy-alpha-D-ribose 1-phosphate + thymine. It catalyses the reaction uridine + phosphate = alpha-D-ribose 1-phosphate + uracil. It carries out the reaction xanthosine + phosphate = alpha-D-ribose 1-phosphate + xanthine. In terms of biological role, catalyzes the phosphorolysis of diverse nucleosides, yielding D-ribose 1-phosphate and the respective free bases. Can use uridine, adenosine, guanosine, cytidine, thymidine, inosine and xanthosine as substrates. Also catalyzes the reverse reactions. The sequence is that of Pyrimidine/purine nucleoside phosphorylase from Albidiferax ferrireducens (strain ATCC BAA-621 / DSM 15236 / T118) (Rhodoferax ferrireducens).